The sequence spans 232 residues: 2-C-methyl-D-erythritol 4-phosphate cytidylyltransferase (232 aa).

The protein belongs to the IspD/TarI cytidylyltransferase family. IspD subfamily.

It catalyses the reaction 2-C-methyl-D-erythritol 4-phosphate + CTP + H(+) = 4-CDP-2-C-methyl-D-erythritol + diphosphate. Its pathway is isoprenoid biosynthesis; isopentenyl diphosphate biosynthesis via DXP pathway; isopentenyl diphosphate from 1-deoxy-D-xylulose 5-phosphate: step 2/6. Functionally, catalyzes the formation of 4-diphosphocytidyl-2-C-methyl-D-erythritol from CTP and 2-C-methyl-D-erythritol 4-phosphate (MEP). The protein is 2-C-methyl-D-erythritol 4-phosphate cytidylyltransferase of Deinococcus radiodurans (strain ATCC 13939 / DSM 20539 / JCM 16871 / CCUG 27074 / LMG 4051 / NBRC 15346 / NCIMB 9279 / VKM B-1422 / R1).